A 40-amino-acid chain; its full sequence is MKVRASLKSLKDKDGSQVVRRRGKLYVVNKRNPRWKGRQG.

Belongs to the bacterial ribosomal protein bL36 family.

The protein is Large ribosomal subunit protein bL36A of Saccharopolyspora erythraea (strain ATCC 11635 / DSM 40517 / JCM 4748 / NBRC 13426 / NCIMB 8594 / NRRL 2338).